Reading from the N-terminus, the 211-residue chain is MNGILISLEGPDGAGKTTVLQEILPEIQKMKREVVPTREPGGVRVAEEIRQIILDPKNTEIDSKTELMLFAAARRLHMQEKMLPALRAGKVVIVDRFIDSSVAYQGYGRDLGVEVVDWLNYFATDGLKPDLTLYFDIDTDVALERIMKNRADEVNRLDLERAEMHRKVREGYLEIVAKEPGRFVKIDASQSLEKVVADTLEVLKKRFVSEF.

10–17 (GPDGAGKT) lines the ATP pocket.

Belongs to the thymidylate kinase family.

It carries out the reaction dTMP + ATP = dTDP + ADP. Phosphorylation of dTMP to form dTDP in both de novo and salvage pathways of dTTP synthesis. The polypeptide is Thymidylate kinase (Lactococcus lactis subsp. cremoris (strain MG1363)).